Here is a 219-residue protein sequence, read N- to C-terminus: Clathrin light chain (219 aa).

The tract at residues 32–136 (AEITGGSASA…KKEELRQQSK (105 aa)) is disordered. Residues 96-158 (PPPSREEPEK…SISKTKLASR (63 aa)) are involved in binding clathrin heavy chain. The span at 99–136 (SREEPEKIRKWREEQKQRLEEKDIEEERKKEELRQQSK) shows a compositional bias: basic and acidic residues.

It belongs to the clathrin light chain family. Clathrin coats are formed from molecules containing 3 heavy chains and 3 light chains.

It localises to the cytoplasmic vesicle membrane. The protein resides in the membrane. Its subcellular location is the coated pit. Its function is as follows. Clathrin is the major protein of the polyhedral coat of coated pits and vesicles. In Drosophila melanogaster (Fruit fly), this protein is Clathrin light chain (Clc).